The primary structure comprises 332 residues: 2,3-diketo-L-gulonate reductase (332 aa).

H44 functions as the Proton donor in the catalytic mechanism. NAD(+) is bound by residues 168 to 174, 224 to 225, and 304 to 306; these read ITMVDMS, WK, and GHE.

It belongs to the LDH2/MDH2 oxidoreductase family. DlgD subfamily. In terms of assembly, homodimer.

It is found in the cytoplasm. The catalysed reaction is 3-dehydro-L-gulonate + NAD(+) = 2,3-dioxo-L-gulonate + NADH + H(+). The enzyme catalyses 3-dehydro-L-gulonate + NADP(+) = 2,3-dioxo-L-gulonate + NADPH + H(+). Catalyzes the reduction of 2,3-diketo-L-gulonate in the presence of NADH, to form 3-keto-L-gulonate. This Escherichia coli O6:K15:H31 (strain 536 / UPEC) protein is 2,3-diketo-L-gulonate reductase.